The primary structure comprises 246 residues: Small ribosomal subunit protein uS2 (246 aa).

Belongs to the universal ribosomal protein uS2 family.

This is Small ribosomal subunit protein uS2 from Lachnoclostridium phytofermentans (strain ATCC 700394 / DSM 18823 / ISDg) (Clostridium phytofermentans).